The chain runs to 268 residues: Cell division cycle-associated protein 3 (268 aa).

Disordered stretches follow at residues 1–232 (MGSA…SELK) and 247–268 (GRAW…LVES). Serine 29 and serine 31 each carry phosphoserine. A Phosphothreonine modification is found at threonine 37. Phosphoserine is present on residues serine 44, serine 64, and serine 68. Residues 56 to 66 (EGLKHAQDSDP) show a composition bias toward basic and acidic residues. Position 76 is a phosphothreonine (threonine 76). Serine 87 and serine 94 each carry phosphoserine. The tract at residues 91–120 (KQLSEVFETEDSKSNLPPEPVLPPEAPLSS) is F-box-like. The segment covering 107–116 (PPEPVLPPEA) has biased composition (pro residues). Low complexity predominate over residues 117-126 (PLSSELDLPL). Polar residues-rich tracts occupy residues 128 to 149 (TQLS…SKQV), 158 to 169 (PTETPVASQSSD), and 178 to 194 (PRSS…NSSK). Serine 199 is subject to Phosphoserine. Threonine 202 carries the post-translational modification Phosphothreonine. Polar residues predominate over residues 205–215 (QDDNSPGTLTL). Serine 209 carries the post-translational modification Phosphoserine. Threonine 212 carries the phosphothreonine modification. A KEN box motif is present at residues 258–260 (KEN).

Interacts with SKP1. Part of a SCF (SKP1-cullin-F-box) protein ligase complex. Post-translationally, ubiquitinated and degraded by the APC/C-Cdh1 complex.

Its subcellular location is the cytoplasm. The protein localises to the cytosol. It participates in protein modification; protein ubiquitination. In terms of biological role, F-box-like protein which is required for entry into mitosis. Acts by participating in E3 ligase complexes that mediate the ubiquitination and degradation of WEE1 kinase at G2/M phase. The protein is Cell division cycle-associated protein 3 (CDCA3) of Homo sapiens (Human).